A 168-amino-acid chain; its full sequence is Ribosome rescue factor SmrB (168 aa).

Residues 92–167 (LDLHGLTKEQ…GDAAILILFE (76 aa)) enclose the Smr domain.

This sequence belongs to the SmrB family. In terms of assembly, associates with collided ribosomes, but not with correctly translating polysomes.

Functionally, acts as a ribosome collision sensor. Detects stalled/collided disomes (pairs of ribosomes where the leading ribosome is stalled and a second ribosome has collided with it) and endonucleolytically cleaves mRNA at the 5' boundary of the stalled ribosome. Stalled/collided disomes form a new interface (primarily via the 30S subunits) that binds SmrB. Cleaved mRNA becomes available for tmRNA ligation, leading to ribosomal subunit dissociation and rescue of stalled ribosomes. The sequence is that of Ribosome rescue factor SmrB from Pasteurella multocida (strain Pm70).